Here is a 231-residue protein sequence, read N- to C-terminus: MLEGIFDINHIFDENGIKTLKRFGWDGSVAVQNHNEYSEEKINNAVEYGENCEFKVFSGLKLSTKNQNEMEKAVKKYRNKVDILLVEGGEIKINRRVLEMNDVDILSTPELNRMDNGLDHILARLGSTNRVAIELNFGNLLKSRNYDRSKILWAFQRNLKLAKKYDTPVVISSGANDIYGIKAPGDLRGFLNTITDPLYSKKIIETPSKIVDYRLYLKKDNVLTLGIEVVE.

It belongs to the eukaryotic/archaeal RNase P protein component 3 family. In terms of assembly, consists of a catalytic RNA component and at least 4-5 protein subunits.

The protein resides in the cytoplasm. It catalyses the reaction Endonucleolytic cleavage of RNA, removing 5'-extranucleotides from tRNA precursor.. In terms of biological role, part of ribonuclease P, a protein complex that generates mature tRNA molecules by cleaving their 5'-ends. This Methanococcus maripaludis (strain C5 / ATCC BAA-1333) protein is Ribonuclease P protein component 3.